Here is a 397-residue protein sequence, read N- to C-terminus: Mannan endo-1,4-beta-mannosidase 1 (397 aa).

The first 23 residues, 1 to 23 (MSYARRSCICGLFLLFLALVCEA), serve as a signal peptide directing secretion. Trp-83 and Asn-198 together coordinate substrate. Glu-199 serves as the catalytic Proton donor. Residue Tyr-276 participates in substrate binding. Residue Glu-316 is the Nucleophile of the active site. Trp-354 contacts substrate.

This sequence belongs to the glycosyl hydrolase 5 (cellulase A) family.

The protein localises to the secreted. The enzyme catalyses Random hydrolysis of (1-&gt;4)-beta-D-mannosidic linkages in mannans, galactomannans and glucomannans.. The polypeptide is Mannan endo-1,4-beta-mannosidase 1 (MAN1) (Solanum lycopersicum (Tomato)).